The sequence spans 84 residues: Large ribosomal subunit protein bL27 (84 aa).

The interval 1 to 21 (MAHKKGAGSTKNGRDSKPKML) is disordered.

Belongs to the bacterial ribosomal protein bL27 family.

This Dehalococcoides mccartyi (strain ATCC BAA-2100 / JCM 16839 / KCTC 5957 / BAV1) protein is Large ribosomal subunit protein bL27.